The chain runs to 238 residues: MORN repeat-containing protein 3 (238 aa).

7 MORN repeats span residues 38-60, 62-84, 91-113, 114-136, 137-159, 160-182, and 184-205; these read YTGE…RRKS, YEGD…DSNT, YSGY…AKEY, YEGE…NGDI, YEGE…NENR, YEGS…NKGQ, and YEGV…GRTE.

It localises to the cytoplasmic vesicle. Its subcellular location is the secretory vesicle. The protein resides in the acrosome. Assembles a suppression complex (suppresome) by tethering SIRT1 and MDM2 to regulate composite modifications of p53/TP53. Confers both deacetylation-mediated functional inactivation, by SIRT1, and ubiquitination-dependent degradation, by MDM2, of p53/TP53, promoting a proliferative and cell survival behaviors. May play a role in the regulation of spermatogenesis. In Xenopus laevis (African clawed frog), this protein is MORN repeat-containing protein 3 (morn3).